The sequence spans 41 residues: Large ribosomal subunit protein bL36 (41 aa).

It belongs to the bacterial ribosomal protein bL36 family.

This chain is Large ribosomal subunit protein bL36, found in Rickettsia prowazekii (strain Madrid E).